We begin with the raw amino-acid sequence, 509 residues long: ATP synthase subunit alpha (509 aa).

169–176 (GDRQTGKT) contacts ATP.

Belongs to the ATPase alpha/beta chains family. F-type ATPases have 2 components, CF(1) - the catalytic core - and CF(0) - the membrane proton channel. CF(1) has five subunits: alpha(3), beta(3), gamma(1), delta(1), epsilon(1). CF(0) has four main subunits: a(1), b(1), b'(1) and c(9-12).

It is found in the cell inner membrane. The catalysed reaction is ATP + H2O + 4 H(+)(in) = ADP + phosphate + 5 H(+)(out). Functionally, produces ATP from ADP in the presence of a proton gradient across the membrane. The alpha chain is a regulatory subunit. This Bradyrhizobium sp. (strain ORS 278) protein is ATP synthase subunit alpha.